The sequence spans 447 residues: Argininosuccinate synthase (447 aa).

Residues 20-28 and Ala-46 each bind ATP; that span reads AFSGGLDTS. Residue Tyr-102 participates in L-citrulline binding. ATP is bound by residues Gly-132 and Thr-134. L-aspartate contacts are provided by Thr-134, Asn-138, and Asp-139. Residue Asn-138 participates in L-citrulline binding. Asp-139 lines the ATP pocket. L-citrulline-binding residues include Arg-142 and Ser-195. Residue Asp-197 coordinates ATP. Positions 204, 206, and 283 each coordinate L-citrulline.

It belongs to the argininosuccinate synthase family. Type 2 subfamily. In terms of assembly, homotetramer.

It is found in the cytoplasm. It catalyses the reaction L-citrulline + L-aspartate + ATP = 2-(N(omega)-L-arginino)succinate + AMP + diphosphate + H(+). It participates in amino-acid biosynthesis; L-arginine biosynthesis; L-arginine from L-ornithine and carbamoyl phosphate: step 2/3. This Neisseria gonorrhoeae (strain ATCC 700825 / FA 1090) protein is Argininosuccinate synthase.